The following is an 825-amino-acid chain: Beta-glucosidase (825 aa).

The signal sequence occupies residues 1-20; it reads MLLPLYGLASFLVLSQAALV. Asparagine 21, asparagine 74, asparagine 97, asparagine 230, and asparagine 271 each carry an N-linked (GlcNAc...) asparagine glycan. Aspartate 299 is a catalytic residue. N-linked (GlcNAc...) asparagine glycosylation is found at asparagine 328, asparagine 335, asparagine 537, asparagine 550, asparagine 556, asparagine 578, asparagine 667, asparagine 690, asparagine 718, asparagine 733, and asparagine 761.

Belongs to the glycosyl hydrolase 3 family. In terms of assembly, homotetramer.

The enzyme catalyses Hydrolysis of terminal, non-reducing beta-D-glucosyl residues with release of beta-D-glucose.. The protein operates within glycan metabolism; cellulose degradation. The protein is Beta-glucosidase of Wickerhamomyces anomalus (Yeast).